Here is an 816-residue protein sequence, read N- to C-terminus: MGDMVVEPATLKPTSEPTPSPSGNNGGSLLSVITEGVGELSVIDPEVAQKACQEVLEKVKLLHGGVAISSKGSPLELVNGDGVDNEIRCLDDPPTEIREEEDEMEPGVVSGTAKGTRRRRQNNSAKQSWLLRLFESKLFDISMAISYLYNSKEPGVQAYIGNRLFCFRNEDVDFYLPQLLNMYIHMDEDVGDAIKPYIVHRCRQSINFSLQCALLLGAYSSDMHISTQRHSRGTKLRKLILSDELKPAHRKRELPTLSPAPDTGLSPSKRTHQRSKSDATASISLSSNLKRTASNPKVENEDEELSSSTESIDNSFSSPVRLAPEREFIKSLMAIGKRLATLPTKEQKTQRLISELSLLNHKLPARVWLPTAGFDHHVVRVPHTQAVVLNSKDKAPYLIYVEVLECENFDTTNVPARIPENRIRSTRSVENLPECGITHEQRAGSFSTVPNYDNDDEAWSVDDIGELQVELPEVHTNSCDNISQFSVDSITSQESKEPVFIAAGDIRRRLSEQLAHTPTAFKRDPEDPSAVALKEPWQEKVRRIREGSPYGHLPNWRLLSVIVKCGDDLRQELLAFQVLKQLQSIWEQERVPLWIKPYKILVISADSGMIEPVVNAVSIHQVKKQSQLSLLDYFLQEHGSYTTEAFLSAQRNFVQSCAGYCLVCYLLQVKDRHNGNILLDAEGHIIHIDFGFILSSSPRNLGFETSAFKLTTEFVDVMGGLNGDMFNYYKMLMLQGLIAARKHMDKVVQIVEIMQQGSQLPCFHGSSTIRNLKERFHMSMTEEQLQLLVEQMVDGSMRSITTKLYDGFQYLTNGIM.

Disordered regions lie at residues 1 to 29 (MGDM…GGSL), 99 to 121 (EEED…RRRQ), and 250 to 318 (RKRE…SFSS). Glycine 2 is subject to N-acetylglycine. The segment at 2–68 (GDMVVEPATL…VKLLHGGVAI (67 aa)) is interaction with ACBD3. A compositionally biased stretch (low complexity) spans 10–29 (TLKPTSEPTPSPSGNNGGSL). A PIK helical domain is found at 61–242 (LLHGGVAISS…GTKLRKLILS (182 aa)). At serine 258 the chain carries Phosphoserine. Threonine 263 is modified (phosphothreonine). Serine 266, serine 275, serine 277, serine 284, and serine 294 each carry phosphoserine. 2 stretches are compositionally biased toward polar residues: residues 278–297 (DATA…SNPK) and 306–318 (SSST…SFSS). Serine 428 carries the phosphoserine modification. Threonine 438 is subject to Phosphothreonine. The residue at position 511 (serine 511) is a Phosphoserine. Phosphothreonine is present on residues threonine 517 and threonine 519. One can recognise a PI3K/PI4K catalytic domain in the interval 535 to 801 (EPWQEKVRRI…MVDGSMRSIT (267 aa)). A G-loop region spans residues 541 to 547 (VRRIREG). Positions 668-676 (QVKDRHNGN) are catalytic loop. Positions 687–711 (HIDFGFILSSSPRNLGFETSAFKLT) are activation loop.

This sequence belongs to the PI3/PI4-kinase family. Type III PI4K subfamily. As to quaternary structure, interacts with ARF1 and ARF3 in the Golgi complex, but not with ARF4, ARF5 or ARF6. Interacts with NCS1/FREQ in a calcium-independent manner. Interacts with CALN1/CABP8 and CALN2/CABP7; in a calcium-dependent manner; this interaction competes with NCS1/FREQ binding. Interacts with ACBD3. Interacts with ARMH3, YWHAB, YWHAE, YWHAG, YWHAH, YWHAQ, YWHAZ and SFN. Interacts with GGA2 (via VHS domain); the interaction is important for PI4KB location at the Golgi apparatus membrane. Interacts with ATG9A. The cofactor is Mg(2+). Mn(2+) serves as cofactor. In terms of tissue distribution, strongly expressed in brain, kidney, lung, small intestine, uterus and adrenal gland. Weaker expression in liver, heart, skeletal muscle, thymus and testis. Not detected in spleen.

It is found in the golgi apparatus. Its subcellular location is the endomembrane system. It localises to the mitochondrion outer membrane. The protein resides in the rough endoplasmic reticulum membrane. The protein localises to the golgi apparatus membrane. It catalyses the reaction a 1,2-diacyl-sn-glycero-3-phospho-(1D-myo-inositol) + ATP = a 1,2-diacyl-sn-glycero-3-phospho-(1D-myo-inositol 4-phosphate) + ADP + H(+). With respect to regulation, inhibited by wortmannin. Increased kinase activity upon interaction with NCS1/FREQ. Its function is as follows. Phosphorylates phosphatidylinositol (PI) in the first committed step in the production of the second messenger inositol-1,4,5,-trisphosphate (PIP). May regulate Golgi disintegration/reorganization during mitosis, possibly via its phosphorylation. Involved in Golgi-to-plasma membrane trafficking. May play an important role in the inner ear development. The chain is Phosphatidylinositol 4-kinase beta (Pi4kb) from Rattus norvegicus (Rat).